The following is a 196-amino-acid chain: Imidazole glycerol phosphate synthase subunit HisH (196 aa).

The Glutamine amidotransferase type-1 domain occupies 2–196 (KVAVIKYNAG…ERIIKNFLEL (195 aa)). Catalysis depends on Cys77, which acts as the Nucleophile. Residues His178 and Glu180 contribute to the active site.

In terms of assembly, heterodimer of HisH and HisF.

It localises to the cytoplasm. It catalyses the reaction 5-[(5-phospho-1-deoxy-D-ribulos-1-ylimino)methylamino]-1-(5-phospho-beta-D-ribosyl)imidazole-4-carboxamide + L-glutamine = D-erythro-1-(imidazol-4-yl)glycerol 3-phosphate + 5-amino-1-(5-phospho-beta-D-ribosyl)imidazole-4-carboxamide + L-glutamate + H(+). It carries out the reaction L-glutamine + H2O = L-glutamate + NH4(+). Its pathway is amino-acid biosynthesis; L-histidine biosynthesis; L-histidine from 5-phospho-alpha-D-ribose 1-diphosphate: step 5/9. IGPS catalyzes the conversion of PRFAR and glutamine to IGP, AICAR and glutamate. The HisH subunit catalyzes the hydrolysis of glutamine to glutamate and ammonia as part of the synthesis of IGP and AICAR. The resulting ammonia molecule is channeled to the active site of HisF. The chain is Imidazole glycerol phosphate synthase subunit HisH from Bacteroides fragilis (strain YCH46).